We begin with the raw amino-acid sequence, 155 residues long: Leader peptidase HopD (155 aa).

Belongs to the peptidase A24 family.

This is Leader peptidase HopD (hopD) from Salmonella typhimurium (strain LT2 / SGSC1412 / ATCC 700720).